The sequence spans 421 residues: Diaminopimelate decarboxylase (421 aa).

An N6-(pyridoxal phosphate)lysine modification is found at Lys62. Pyridoxal 5'-phosphate-binding positions include Gly237 and 279 to 282 (EPGR). Arg282, Arg319, and Tyr323 together coordinate substrate. Catalysis depends on Cys349, which acts as the Proton donor. 2 residues coordinate substrate: Glu350 and Tyr379. Residue Tyr379 coordinates pyridoxal 5'-phosphate.

The protein belongs to the Orn/Lys/Arg decarboxylase class-II family. LysA subfamily. Homodimer. It depends on pyridoxal 5'-phosphate as a cofactor.

The enzyme catalyses meso-2,6-diaminopimelate + H(+) = L-lysine + CO2. Its pathway is amino-acid biosynthesis; L-lysine biosynthesis via DAP pathway; L-lysine from DL-2,6-diaminopimelate: step 1/1. Specifically catalyzes the decarboxylation of meso-diaminopimelate (meso-DAP) to L-lysine. Plays a role in beta-lactam antibiotic resistance. This chain is Diaminopimelate decarboxylase (lysA), found in Staphylococcus aureus (strain COL).